The primary structure comprises 311 residues: Formyltransferase/hydrolase complex subunit D (311 aa).

This sequence belongs to the FTR family. Homotetramer. Octaheteromer. Part of the formyltransferase/hydrolase complex fhc; composed of FhcA, FhcB, FhcC and FhcD.

The protein resides in the cytoplasm. The catalysed reaction is N-formylmethanofuran + 5,6,7,8-tetrahydromethanopterin + H(+) = N(5)-formyl-5,6,7,8-tetrahydromethanopterin + methanofuran. Its pathway is one-carbon metabolism; formaldehyde degradation; formate from formaldehyde (H(4)MPT route): step 4/5. Involved in the transformation of 5-formyl tetrahydromethanopterin (5-formyl-H(4)MPT) to methanofuran (MFR) and formate via the intermediate formylmethanofuran (formyl-MFR). Catalyzes the transfer of a formyl group from 5-formyl-H(4)MPT to MFR to produce tetrahydromethanopterin (H(4)MPT) and formyl-MFR, which is then hydrolyzed to formate and MFR. In Methylorubrum extorquens (strain ATCC 14718 / DSM 1338 / JCM 2805 / NCIMB 9133 / AM1) (Methylobacterium extorquens), this protein is Formyltransferase/hydrolase complex subunit D.